A 345-amino-acid polypeptide reads, in one-letter code: MTDKTSLSYKDAGVDIDAGNALVDRIKGVVKKTRRPEVMGGLGGFGALCALPQKYREPVLVSGTDGVGTKLRLAMDLKRHDTIGIDLVAMCVNDLVVQGAEPLFFLDYYATGKLDVDTAASVINGIAEGCLQSGCALVGGETAEMPGMYHGDDYDVAGFCVGVVEKSEIIDGSKVADGDVLVALASSGPHSNGYSLVRKILEVSGADPQTTELDGKPLADHLLAPTRIYVKPVLELIEKLEVHAIAHLTGGGFWENIPRVLPDNTQAVIDEASWQWPAVFNWLQQAGNVSRHEMYRTFNCGVGMVIALPAAEADNAVALLNSLGETAWKIGAIKASDAQERVVIA.

The protein belongs to the AIR synthase family.

The protein resides in the cytoplasm. The enzyme catalyses 2-formamido-N(1)-(5-O-phospho-beta-D-ribosyl)acetamidine + ATP = 5-amino-1-(5-phospho-beta-D-ribosyl)imidazole + ADP + phosphate + H(+). Its pathway is purine metabolism; IMP biosynthesis via de novo pathway; 5-amino-1-(5-phospho-D-ribosyl)imidazole from N(2)-formyl-N(1)-(5-phospho-D-ribosyl)glycinamide: step 2/2. The chain is Phosphoribosylformylglycinamidine cyclo-ligase from Cronobacter sakazakii (strain ATCC BAA-894) (Enterobacter sakazakii).